The chain runs to 256 residues: 4-oxalocrotonate decarboxylase (256 aa).

The protein belongs to the hydratase/decarboxylase family. In terms of assembly, forms a complex with AmnF. Requires Mg(2+) as cofactor. It depends on Mn(2+) as a cofactor.

It catalyses the reaction (3E)-2-oxohex-3-enedioate + H(+) = 2-oxopent-4-enoate + CO2. Strongly inhibited by Fe(2+), Fe(3+), K(3)[Fe(CN)(6)], Ag(+) and Cu(2+). Its function is as follows. Involved in the modified meta-cleavage pathway for the 2-aminophenol catabolism. The polypeptide is 4-oxalocrotonate decarboxylase (amnE) (Pseudomonas sp).